Consider the following 661-residue polypeptide: Translation factor GUF1 homolog, mitochondrial (661 aa).

The region spanning 59 to 242 is the tr-type G domain; that stretch reads ENIRNFCIVA…AIIDRIPSPK (184 aa). Residues 68–75, 135–139, and 189–192 contribute to the GTP site; these read AHVDHGKS, DTPGH, and NKVD.

This sequence belongs to the TRAFAC class translation factor GTPase superfamily. Classic translation factor GTPase family. LepA subfamily.

It localises to the mitochondrion inner membrane. The catalysed reaction is GTP + H2O = GDP + phosphate + H(+). In terms of biological role, promotes mitochondrial protein synthesis. May act as a fidelity factor of the translation reaction, by catalyzing a one-codon backward translocation of tRNAs on improperly translocated ribosomes. Binds to mitochondrial ribosomes in a GTP-dependent manner. The polypeptide is Translation factor GUF1 homolog, mitochondrial (Ixodes scapularis (Black-legged tick)).